Here is a 215-residue protein sequence, read N- to C-terminus: Pyrrolidone-carboxylate peptidase (215 aa).

Active-site residues include glutamate 80, cysteine 143, and histidine 167.

Belongs to the peptidase C15 family. As to quaternary structure, homotetramer.

It localises to the cytoplasm. The enzyme catalyses Release of an N-terminal pyroglutamyl group from a polypeptide, the second amino acid generally not being Pro.. Functionally, removes 5-oxoproline from various penultimate amino acid residues except L-proline. The polypeptide is Pyrrolidone-carboxylate peptidase (Bacillus cytotoxicus (strain DSM 22905 / CIP 110041 / 391-98 / NVH 391-98)).